A 322-amino-acid chain; its full sequence is Peptidase 1 (322 aa).

Residues 1 to 18 form the signal peptide; that stretch reads MKFVLAIASLLVLSVVYA. Residues 19 to 99 constitute a propeptide that is removed on maturation; it reads YPSEIRTFEE…LKKEFDLDAG (81 aa). The cysteines at positions 131 and 171 are disulfide-linked. Cys134 is a catalytic residue. N-linked (GlcNAc...) asparagine glycosylation occurs at Asn152. Residues His270 and Asn290 contribute to the active site.

This sequence belongs to the peptidase C1 family. In terms of tissue distribution, expressed in the gut.

The protein resides in the secreted. It catalyses the reaction Broad endopeptidase specificity.. Functionally, probable thiol protease. This Psoroptes ovis (Sheep scab mite) protein is Peptidase 1.